The sequence spans 956 residues: UvrABC system protein A (956 aa).

An ATP-binding site is contributed by Gly-33–Ser-40. The C4-type zinc finger occupies Cys-252–Cys-279. 2 consecutive ABC transporter domains span residues Trp-309–Ile-587 and Gly-607–Lys-936. Gly-639 to Ser-646 contacts ATP. The segment at Cys-738 to Cys-764 adopts a C4-type zinc-finger fold.

The protein belongs to the ABC transporter superfamily. UvrA family. In terms of assembly, forms a heterotetramer with UvrB during the search for lesions.

It is found in the cytoplasm. In terms of biological role, the UvrABC repair system catalyzes the recognition and processing of DNA lesions. UvrA is an ATPase and a DNA-binding protein. A damage recognition complex composed of 2 UvrA and 2 UvrB subunits scans DNA for abnormalities. When the presence of a lesion has been verified by UvrB, the UvrA molecules dissociate. This Listeria monocytogenes serotype 4b (strain F2365) protein is UvrABC system protein A.